A 104-amino-acid chain; its full sequence is Phosphoribosyl-ATP pyrophosphatase (104 aa).

Belongs to the PRA-PH family.

Its subcellular location is the cytoplasm. It carries out the reaction 1-(5-phospho-beta-D-ribosyl)-ATP + H2O = 1-(5-phospho-beta-D-ribosyl)-5'-AMP + diphosphate + H(+). It participates in amino-acid biosynthesis; L-histidine biosynthesis; L-histidine from 5-phospho-alpha-D-ribose 1-diphosphate: step 2/9. The protein is Phosphoribosyl-ATP pyrophosphatase of Allorhizobium ampelinum (strain ATCC BAA-846 / DSM 112012 / S4) (Agrobacterium vitis (strain S4)).